The following is a 142-amino-acid chain: Small ribosomal subunit protein uS12 (142 aa).

The protein belongs to the universal ribosomal protein uS12 family. As to quaternary structure, part of the 30S ribosomal subunit.

In terms of biological role, with S4 and S5 plays an important role in translational accuracy. Located at the interface of the 30S and 50S subunits. This Methanothrix thermoacetophila (strain DSM 6194 / JCM 14653 / NBRC 101360 / PT) (Methanosaeta thermophila) protein is Small ribosomal subunit protein uS12.